A 345-amino-acid chain; its full sequence is Papain (345 aa).

The signal sequence occupies residues 1–18 (MAMIPSISKLLFVAICLF). The propeptide at 19–133 (VYMGLSFGDF…EEVLNDGDVN (115 aa)) is activation peptide. Disulfide bonds link cysteine 155–cysteine 196, cysteine 189–cysteine 228, and cysteine 286–cysteine 333. Residue cysteine 158 is part of the active site. Cysteine 158 provides a ligand contact to E64. Cysteine 158 is a leupeptin binding site. Active-site residues include histidine 292 and asparagine 308.

Belongs to the peptidase C1 family.

It catalyses the reaction Hydrolysis of proteins with broad specificity for peptide bonds, but preference for an amino acid bearing a large hydrophobic side chain at the P2 position. Does not accept Val in P1'.. Repressed by the active-site-directed cysteine protease inhibitor E64 (L-trans-epoxysuccinyl-leucylamide-(4-guanido)-butane) produced by Aspergillus japonicus. Inhibited by the inhibitor of cysteine proteases from Trypanosoma brucei (TbICP, rhodesain) and Colocasia esculenta cv. Kaohsiung no. 1 (CeCPI, tarocystatin). Repressed by leupeptin, a peptidic cysteine, serine and threonine protease inhibitor. Its function is as follows. Cysteine proteinase with a high level of diversity in substrate specificity, an amino acid bearing a large hydrophobic side chain at the P2 position is preferred. The polypeptide is Papain (Carica papaya (Papaya)).